A 381-amino-acid chain; its full sequence is Cyclin-dependent kinase inhibitor CIP1 (381 aa).

Positions 1-11 (MLLERLHKRLH) are enriched in basic residues. The disordered stretch occupies residues 1 to 30 (MLLERLHKRLHAGSSRRSQENKDKNCKPED). A compositionally biased stretch (basic and acidic residues) spans 17 to 30 (RSQENKDKNCKPED). Threonine 65, threonine 69, and threonine 73 each carry phosphothreonine.

Interact with the CDC28/CLN2 complex. Post-translationally, phosphorylated during S phase in a CDC28-dependent manner. Phosphorylated at Thr-65 and Thr-73 by HOG1 under osmotic stress. The phosphorylations of Thr-65 and Thr-73 are necessary for CIP1-induced growth inhibition.

Its subcellular location is the cytoplasm. The protein resides in the nucleus. Functionally, acts as an inhibitor of the CDC28/CLN2 cyclin-dependent kinase complex. Stabilizes the CDC28 inhibitor SIC1. Negatively regulates the G1/S phase transition. Contributes to osmostress-induced transitory G1 delay. The protein is Cyclin-dependent kinase inhibitor CIP1 of Saccharomyces cerevisiae (strain ATCC 204508 / S288c) (Baker's yeast).